The sequence spans 293 residues: 4-hydroxy-tetrahydrodipicolinate synthase (293 aa).

T45 contributes to the pyruvate binding site. Y133 (proton donor/acceptor) is an active-site residue. K161 acts as the Schiff-base intermediate with substrate in catalysis. Pyruvate is bound at residue I203.

This sequence belongs to the DapA family. As to quaternary structure, homotetramer; dimer of dimers.

It is found in the cytoplasm. The catalysed reaction is L-aspartate 4-semialdehyde + pyruvate = (2S,4S)-4-hydroxy-2,3,4,5-tetrahydrodipicolinate + H2O + H(+). It functions in the pathway amino-acid biosynthesis; L-lysine biosynthesis via DAP pathway; (S)-tetrahydrodipicolinate from L-aspartate: step 3/4. Functionally, catalyzes the condensation of (S)-aspartate-beta-semialdehyde [(S)-ASA] and pyruvate to 4-hydroxy-tetrahydrodipicolinate (HTPA). The polypeptide is 4-hydroxy-tetrahydrodipicolinate synthase (Syntrophotalea carbinolica (strain DSM 2380 / NBRC 103641 / GraBd1) (Pelobacter carbinolicus)).